The chain runs to 189 residues: dTTP/UTP pyrophosphatase (189 aa).

Asp73 acts as the Proton acceptor in catalysis.

Belongs to the Maf family. YhdE subfamily. It depends on a divalent metal cation as a cofactor.

The protein localises to the cytoplasm. It carries out the reaction dTTP + H2O = dTMP + diphosphate + H(+). It catalyses the reaction UTP + H2O = UMP + diphosphate + H(+). Functionally, nucleoside triphosphate pyrophosphatase that hydrolyzes dTTP and UTP. May have a dual role in cell division arrest and in preventing the incorporation of modified nucleotides into cellular nucleic acids. This is dTTP/UTP pyrophosphatase from Vibrio parahaemolyticus serotype O3:K6 (strain RIMD 2210633).